A 337-amino-acid chain; its full sequence is Gastrula zinc finger protein XlCGF26.1 (337 aa).

C2H2-type zinc fingers lie at residues 6–28 (FDCT…YKIH), 34–56 (FICA…SKIH), 62–84 (FPCT…NKIH), 90–112 (FICA…SKIH), 118–140 (FPCT…NKIH), 146–168 (FICA…SKIH), 174–196 (FPCT…NKIH), 202–224 (FTCT…VKIH), 230–252 (FTCT…NKIH), 258–280 (FTCT…FKIH), 286–309 (FSCT…KRTH), and 315–337 (FTCT…NKIH).

The protein belongs to the krueppel C2H2-type zinc-finger protein family.

Its subcellular location is the nucleus. In terms of biological role, may be involved in transcriptional regulation. In Xenopus laevis (African clawed frog), this protein is Gastrula zinc finger protein XlCGF26.1.